Consider the following 131-residue polypeptide: Small ribosomal subunit protein bS6 (131 aa).

Residues 100–131 form a disordered region; the sequence is SPMVKAKDERRSRDYSLEDANMDAEEAGDSEE. Positions 104–115 are enriched in basic and acidic residues; sequence KAKDERRSRDYS. Over residues 119–131 the composition is skewed to acidic residues; the sequence is ANMDAEEAGDSEE.

This sequence belongs to the bacterial ribosomal protein bS6 family.

Binds together with bS18 to 16S ribosomal RNA. The polypeptide is Small ribosomal subunit protein bS6 (Photorhabdus laumondii subsp. laumondii (strain DSM 15139 / CIP 105565 / TT01) (Photorhabdus luminescens subsp. laumondii)).